The following is a 96-amino-acid chain: HIG1 domain family member 1C (96 aa).

Residues 1-26 (MSSDEWSAAEDEGQLSRLLRKSRDSP) are Cytoplasmic-facing. An HIG1 domain is found at 1–91 (MSSDEWSAAE…YKDYIRPRFF (91 aa)). A helical membrane pass occupies residues 27-44 (FVPVGMAGFVAVLSYGLY). At 45-58 (KLNSRREQKMSLHL) the chain is on the extracellular side. Residues 59–81 (IHVRVAAQGCVVGAVTLGVLYSM) traverse the membrane as a helical segment. The Cytoplasmic segment spans residues 82-96 (YKDYIRPRFFNVPKK).

Its subcellular location is the membrane. The sequence is that of HIG1 domain family member 1C (Higd1c) from Mus musculus (Mouse).